Consider the following 90-residue polypeptide: Putative membrane protein insertion efficiency factor (90 aa).

This sequence belongs to the UPF0161 family.

Its subcellular location is the cell membrane. Could be involved in insertion of integral membrane proteins into the membrane. This is Putative membrane protein insertion efficiency factor from Lactococcus lactis subsp. cremoris (strain MG1363).